The following is a 56-amino-acid chain: Large ribosomal subunit protein eL24 (56 aa).

Residues Cys-6, Cys-9, Cys-32, and Cys-36 each contribute to the Zn(2+) site. The C4-type zinc-finger motif lies at 6 to 36 (CSFCNTRITPGTGKLYAKKDGTVYYFCSSKC).

Belongs to the eukaryotic ribosomal protein eL24 family. In terms of assembly, part of the 50S ribosomal subunit. Forms a cluster with proteins L3 and L14. It depends on Zn(2+) as a cofactor.

Functionally, binds to the 23S rRNA. The polypeptide is Large ribosomal subunit protein eL24 (Methanothrix thermoacetophila (strain DSM 6194 / JCM 14653 / NBRC 101360 / PT) (Methanosaeta thermophila)).